The sequence spans 244 residues: Protein DMP9 (244 aa).

Residues 1 to 56 (MEKTEESVGIRVYTATPPQKPSPSPPSRSPKPVLISSLPSLPSGAAAGGGRGRKRR) form a disordered region. Positions 18–29 (PQKPSPSPPSRS) are enriched in pro residues. A compositionally biased stretch (low complexity) spans 30 to 45 (PKPVLISSLPSLPSGA). A run of 4 helical transmembrane segments spans residues 71 to 91 (MLVNFLPTGTLLMFEMVLPSI), 99 to 119 (GINTLMIHLLLLLCAMSCFFF), 173 to 193 (LTVNDFVHAVMSVLVFMAIAF), and 213 to 233 (VMESFPIMVGIVCSALFLVFP).

It belongs to the plant DMP1 protein family. As to expression, restricted to flowers and pollen.

The protein resides in the endoplasmic reticulum membrane. It localises to the vacuole membrane. Functionally, involved in membrane remodeling. This Arabidopsis thaliana (Mouse-ear cress) protein is Protein DMP9.